A 259-amino-acid polypeptide reads, in one-letter code: Type-2Aa cytolytic delta-endotoxin (259 aa).

Belongs to the cyt1/cyt2 endotoxin family. In terms of assembly, homodimer (protoxin) and monomer (active toxin). Active after proteolytic processing.

In terms of biological role, kills the larvae of dipteran insects by making pores in the epithelial cell membrane of the insect midgut. This chain is Type-2Aa cytolytic delta-endotoxin (cyt2Aa1), found in Bacillus thuringiensis subsp. kyushuensis.